Reading from the N-terminus, the 256-residue chain is tRNA-cytidine(32) 2-sulfurtransferase (256 aa).

The PP-loop motif motif lies at 35 to 40; the sequence is SGGKDS. Residues C110, C113, and C201 each coordinate [4Fe-4S] cluster.

The protein belongs to the TtcA family. In terms of assembly, homodimer. It depends on Mg(2+) as a cofactor. Requires [4Fe-4S] cluster as cofactor.

It is found in the cytoplasm. The catalysed reaction is cytidine(32) in tRNA + S-sulfanyl-L-cysteinyl-[cysteine desulfurase] + AH2 + ATP = 2-thiocytidine(32) in tRNA + L-cysteinyl-[cysteine desulfurase] + A + AMP + diphosphate + H(+). The protein operates within tRNA modification. Functionally, catalyzes the ATP-dependent 2-thiolation of cytidine in position 32 of tRNA, to form 2-thiocytidine (s(2)C32). The sulfur atoms are provided by the cysteine/cysteine desulfurase (IscS) system. In Coxiella burnetii (strain CbuG_Q212) (Coxiella burnetii (strain Q212)), this protein is tRNA-cytidine(32) 2-sulfurtransferase.